A 465-amino-acid polypeptide reads, in one-letter code: Cysteine--tRNA ligase (465 aa).

C29 contacts Zn(2+). The 'HIGH' region motif lies at 31-41 (PTVYNYIHIGN). Positions 209, 234, and 238 each coordinate Zn(2+). Positions 266 to 270 (KMSKS) match the 'KMSKS' region motif. ATP is bound at residue K269. At S270 the chain carries Phosphoserine.

It belongs to the class-I aminoacyl-tRNA synthetase family. As to quaternary structure, monomer. It depends on Zn(2+) as a cofactor.

Its subcellular location is the cytoplasm. It carries out the reaction tRNA(Cys) + L-cysteine + ATP = L-cysteinyl-tRNA(Cys) + AMP + diphosphate. The chain is Cysteine--tRNA ligase from Anoxybacillus flavithermus (strain DSM 21510 / WK1).